The following is a 296-amino-acid chain: Ribosomal RNA small subunit methyltransferase A (296 aa).

Residues Asn32, Leu34, Gly59, Glu80, Asp105, and Asn130 each coordinate S-adenosyl-L-methionine.

This sequence belongs to the class I-like SAM-binding methyltransferase superfamily. rRNA adenine N(6)-methyltransferase family. RsmA subfamily.

The protein resides in the cytoplasm. It carries out the reaction adenosine(1518)/adenosine(1519) in 16S rRNA + 4 S-adenosyl-L-methionine = N(6)-dimethyladenosine(1518)/N(6)-dimethyladenosine(1519) in 16S rRNA + 4 S-adenosyl-L-homocysteine + 4 H(+). In terms of biological role, specifically dimethylates two adjacent adenosines (A1518 and A1519) in the loop of a conserved hairpin near the 3'-end of 16S rRNA in the 30S particle. May play a critical role in biogenesis of 30S subunits. This Lactiplantibacillus plantarum (strain ATCC BAA-793 / NCIMB 8826 / WCFS1) (Lactobacillus plantarum) protein is Ribosomal RNA small subunit methyltransferase A.